The chain runs to 1122 residues: Maestro heat-like repeat-containing protein family member 7 (1122 aa).

2 disordered regions span residues 1 to 144 (MALS…LSED) and 183 to 203 (SHTI…NTSL). A compositionally biased stretch (low complexity) spans 33 to 65 (TTPRPTPDLTLAPLPAHGVALAPALHPALSPDP). Composition is skewed to polar residues over residues 75–95 (DISN…INTA), 120–136 (PVPS…SPEN), and 184–203 (HTIS…NTSL). Asparagine 200, asparagine 210, asparagine 255, asparagine 267, and asparagine 296 each carry an N-linked (GlcNAc...) asparagine glycan. The disordered stretch occupies residues 246–265 (WNTGSKGSVNVTSNSQPRSG). Phosphoserine is present on serine 356. The interval 363–385 (FRSPPEGTSEDAKANESEKRDHD) is disordered. Basic and acidic residues predominate over residues 372–385 (EDAKANESEKRDHD). Asparagine 541 and asparagine 546 each carry an N-linked (GlcNAc...) asparagine glycan. A run of 2 helical transmembrane segments spans residues 548 to 568 (TLVT…LLLG) and 722 to 742 (LLPI…ALLM). 4 HEAT repeats span residues 913–950 (QELC…MEQV), 992–1029 (TKVQ…GQAK), 1035–1072 (SVYI…KLRM), and 1080–1117 (EQLT…FFLL).

The protein localises to the membrane. The polypeptide is Maestro heat-like repeat-containing protein family member 7 (Mroh7) (Rattus norvegicus (Rat)).